The chain runs to 235 residues: Large ribosomal subunit protein uL1 (235 aa).

Belongs to the universal ribosomal protein uL1 family. Part of the 50S ribosomal subunit.

In terms of biological role, binds directly to 23S rRNA. The L1 stalk is quite mobile in the ribosome, and is involved in E site tRNA release. Its function is as follows. Protein L1 is also a translational repressor protein, it controls the translation of the L11 operon by binding to its mRNA. This is Large ribosomal subunit protein uL1 from Mycobacterium tuberculosis (strain ATCC 25177 / H37Ra).